Reading from the N-terminus, the 724-residue chain is Ribosomal RNA large subunit methyltransferase K/L (724 aa).

The THUMP domain maps to 42-153; that stretch reads DAQRLVLWSR…KGRATLSVDL (112 aa).

The protein belongs to the methyltransferase superfamily. RlmKL family.

Its subcellular location is the cytoplasm. The catalysed reaction is guanosine(2445) in 23S rRNA + S-adenosyl-L-methionine = N(2)-methylguanosine(2445) in 23S rRNA + S-adenosyl-L-homocysteine + H(+). The enzyme catalyses guanosine(2069) in 23S rRNA + S-adenosyl-L-methionine = N(2)-methylguanosine(2069) in 23S rRNA + S-adenosyl-L-homocysteine + H(+). Specifically methylates the guanine in position 2445 (m2G2445) and the guanine in position 2069 (m7G2069) of 23S rRNA. The chain is Ribosomal RNA large subunit methyltransferase K/L from Xylella fastidiosa (strain M23).